We begin with the raw amino-acid sequence, 508 residues long: BICD family-like cargo adapter 2 (508 aa).

The span at 1-22 shows a compositional bias: low complexity; that stretch reads MSSPDGPSFPSGPLSGGASPSG. Disordered regions lie at residues 1 to 27, 132 to 152, and 300 to 351; these read MSSPDGPSFPSGPLSGGASPSGDEGFF, LGEQRSEQQDSGRERARALSE, and AHSL…TSLS. Coiled coils occupy residues 64 to 300 and 353 to 458; these read AAEL…SELA and AEIL…DMQV. Positions 135-149 are enriched in basic and acidic residues; sequence QRSEQQDSGRERARA. Residues 470 to 491 form a disordered region; that stretch reads KELSASASSSTPRRAAPRFSLR. A compositionally biased stretch (low complexity) spans 473 to 489; that stretch reads SASASSSTPRRAAPRFS.

This sequence belongs to the BICDR family. As to quaternary structure, interacts with RAB13.

This chain is BICD family-like cargo adapter 2 (BICDL2), found in Homo sapiens (Human).